The primary structure comprises 227 residues: Phosphoglycolate phosphatase (227 aa).

Residue Asp11 is the Nucleophile of the active site. Mg(2+) contacts are provided by Asp11 and Asp13. Residue Lys155 participates in substrate binding. Residues Asp178 and Asp182 each coordinate Mg(2+).

Belongs to the archaeal SPP-like hydrolase family. The cofactor is Mg(2+).

The catalysed reaction is 2-phosphoglycolate + H2O = glycolate + phosphate. Functionally, catalyzes the dephosphorylation of 2-phosphoglycolate. This Haloarcula marismortui (strain ATCC 43049 / DSM 3752 / JCM 8966 / VKM B-1809) (Halobacterium marismortui) protein is Phosphoglycolate phosphatase.